The sequence spans 312 residues: Urease accessory protein 7 (312 aa).

The disordered stretch occupies residues 28-86; it reads QEATGTDSHHAHHHHTPSGASSAISHTHDNMPHDHGQFHDHGPGLWTPEEHGHTHEHLE. Residues 36–87 form a histine rich nickel-binding domain region; the sequence is HHAHHHHTPSGASSAISHTHDNMPHDHGQFHDHGPGLWTPEEHGHTHEHLEH. A compositionally biased stretch (basic and acidic residues) spans 53–86; it reads HTHDNMPHDHGQFHDHGPGLWTPEEHGHTHEHLE. Residues 115-122 carry the GTP binding P-loop motif; the sequence is GPVGSGKT. Residues 147-154 carry the Switch domain 1 motif; it reads TREDQEFL. The switch domain 2 signature appears at 171–172; it reads GG.

This sequence belongs to the SIMIBI class G3E GTPase family. UreG subfamily. URE4, URE6 and URE7 may form a complex that acts as a GTP-hydrolysis-dependent molecular chaperone, activating the urease apoprotein URE1.

Urease accessory protein that binds 2 nickel atoms likely via its conserved histidine-rich domain and supplies nickel for the functional urease URE1. Has probably a dual function as a nickel chaperone and GTPase. Plays a role in host brain invasion. This chain is Urease accessory protein 7, found in Cryptococcus neoformans var. grubii serotype A (strain H99 / ATCC 208821 / CBS 10515 / FGSC 9487) (Filobasidiella neoformans var. grubii).